Reading from the N-terminus, the 362-residue chain is GDSL esterase/lipase At5g22810 (362 aa).

The signal sequence occupies residues 1-28; it reads MGFSGIWLNLYVVFGSLMVFERMVVMVV. The active-site Nucleophile is the serine 44. N-linked (GlcNAc...) asparagine glycosylation is found at asparagine 159, asparagine 162, asparagine 264, and asparagine 329. Active-site residues include aspartate 337 and histidine 340.

This sequence belongs to the 'GDSL' lipolytic enzyme family.

It is found in the secreted. The chain is GDSL esterase/lipase At5g22810 from Arabidopsis thaliana (Mouse-ear cress).